The following is a 311-amino-acid chain: E3 ubiquitin-protein ligase RNF126 (311 aa).

Residues Cys-13, Cys-16, Cys-29, and Cys-32 each coordinate Zn(2+). A C4-type zinc finger spans residues 13 to 32 (CHSCTAEIIPRLPEYTCPRC). Disordered stretches follow at residues 42–62 (ETRN…NRPS) and 95–133 (GTSG…RRAA). Residues 101–114 (EEPRDGESRREHQS) show a composition bias toward basic and acidic residues. The segment covering 123–133 (PRARLSTRRAA) has biased composition (basic residues). Residues 227-268 (CPVCKEDYTVGESVRQLPCNHLFHNDCIIPWLEQHDTCPVCR) form an RING-type zinc finger. Residues 274-311 (QNTATNPPGLTEMTFSSSSTSSSSSTSPTDENNAANNS) form a disordered region. The span at 289–300 (SSSSTSSSSSTS) shows a compositional bias: low complexity. Polar residues predominate over residues 301–311 (PTDENNAANNS).

It localises to the cytoplasm. The protein localises to the nucleus. The enzyme catalyses S-ubiquitinyl-[E2 ubiquitin-conjugating enzyme]-L-cysteine + [acceptor protein]-L-lysine = [E2 ubiquitin-conjugating enzyme]-L-cysteine + N(6)-ubiquitinyl-[acceptor protein]-L-lysine.. The protein operates within protein modification; protein ubiquitination. E3 ubiquitin-protein ligase that mediates ubiquitination oF target proteins. Depending on the associated E2 ligase, mediates 'Lys-27'-, 'Lys-29'-, 'Lys-48'- and/or 'Lys-63'-linked polyubiquitination of substrates. Part of a BAG6-dependent quality control process ensuring that proteins of the secretory pathway that are mislocalized to the cytosol are degraded by the proteasome. Probably acts by providing the ubiquitin ligase activity associated with the BAG6 complex and be responsible for ubiquitination of the hydrophobic mislocalized proteins and their targeting to the proteasome. In Xenopus tropicalis (Western clawed frog), this protein is E3 ubiquitin-protein ligase RNF126.